Reading from the N-terminus, the 232-residue chain is Large ribosomal subunit protein uL1 (232 aa).

This sequence belongs to the universal ribosomal protein uL1 family. As to quaternary structure, part of the 50S ribosomal subunit.

Functionally, binds directly to 23S rRNA. The L1 stalk is quite mobile in the ribosome, and is involved in E site tRNA release. Protein L1 is also a translational repressor protein, it controls the translation of the L11 operon by binding to its mRNA. The protein is Large ribosomal subunit protein uL1 of Dinoroseobacter shibae (strain DSM 16493 / NCIMB 14021 / DFL 12).